An 84-amino-acid chain; its full sequence is Mitochondrial import inner membrane translocase subunit Tim9 (84 aa).

Residues 28–52 (CFMDCVKDFTTREVKPEETTCSESC) carry the Twin CX3C motif motif. Disulfide bonds link Cys28–Cys52 and Cys32–Cys48.

This sequence belongs to the small Tim family. As to quaternary structure, heterohexamer; composed of 3 copies of TIMM9 and 3 copies of TIMM10/TIM10A, named soluble 70 kDa complex. The complex forms a 6-bladed alpha-propeller structure and associates with the TIMM22 component of the TIM22 complex. Interacts with multi-pass transmembrane proteins in transit.

It is found in the mitochondrion inner membrane. Functionally, mitochondrial intermembrane chaperone that participates in the import and insertion of multi-pass transmembrane proteins into the mitochondrial inner membrane. May also be required for the transfer of beta-barrel precursors from the TOM complex to the sorting and assembly machinery (SAM complex) of the outer membrane. Acts as a chaperone-like protein that protects the hydrophobic precursors from aggregation and guide them through the mitochondrial intermembrane space. The sequence is that of Mitochondrial import inner membrane translocase subunit Tim9 (timm9) from Danio rerio (Zebrafish).